Reading from the N-terminus, the 167-residue chain is NAD(P)H-quinone oxidoreductase subunit I, chloroplastic (167 aa).

4Fe-4S ferredoxin-type domains lie at 55-84 (GRIHFEFDKCIACEVCVRVCPIDLPVVDWK) and 95-124 (LNYSIDFGICIFCGNCVEYCPTNCLSMTEE). Cysteine 64, cysteine 67, cysteine 70, cysteine 74, cysteine 104, cysteine 107, cysteine 110, and cysteine 114 together coordinate [4Fe-4S] cluster.

The protein belongs to the complex I 23 kDa subunit family. In terms of assembly, NDH is composed of at least 16 different subunits, 5 of which are encoded in the nucleus. [4Fe-4S] cluster is required as a cofactor.

Its subcellular location is the plastid. It localises to the chloroplast thylakoid membrane. It carries out the reaction a plastoquinone + NADH + (n+1) H(+)(in) = a plastoquinol + NAD(+) + n H(+)(out). It catalyses the reaction a plastoquinone + NADPH + (n+1) H(+)(in) = a plastoquinol + NADP(+) + n H(+)(out). Its function is as follows. NDH shuttles electrons from NAD(P)H:plastoquinone, via FMN and iron-sulfur (Fe-S) centers, to quinones in the photosynthetic chain and possibly in a chloroplast respiratory chain. The immediate electron acceptor for the enzyme in this species is believed to be plastoquinone. Couples the redox reaction to proton translocation, and thus conserves the redox energy in a proton gradient. The sequence is that of NAD(P)H-quinone oxidoreductase subunit I, chloroplastic from Citrus sinensis (Sweet orange).